We begin with the raw amino-acid sequence, 670 residues long: DNA ligase (670 aa).

Residues Asp-36–Asp-40, Ser-85–Leu-86, and Glu-116 contribute to the NAD(+) site. Catalysis depends on Lys-118, which acts as the N6-AMP-lysine intermediate. Arg-139, Glu-174, Lys-290, and Lys-314 together coordinate NAD(+). Zn(2+)-binding residues include Cys-408, Cys-411, Cys-426, and Cys-431. One can recognise a BRCT domain in the interval Ser-591 to Gln-670.

Belongs to the NAD-dependent DNA ligase family. LigA subfamily. Mg(2+) serves as cofactor. Mn(2+) is required as a cofactor.

It catalyses the reaction NAD(+) + (deoxyribonucleotide)n-3'-hydroxyl + 5'-phospho-(deoxyribonucleotide)m = (deoxyribonucleotide)n+m + AMP + beta-nicotinamide D-nucleotide.. In terms of biological role, DNA ligase that catalyzes the formation of phosphodiester linkages between 5'-phosphoryl and 3'-hydroxyl groups in double-stranded DNA using NAD as a coenzyme and as the energy source for the reaction. It is essential for DNA replication and repair of damaged DNA. In Desulforamulus reducens (strain ATCC BAA-1160 / DSM 100696 / MI-1) (Desulfotomaculum reducens), this protein is DNA ligase.